The sequence spans 199 residues: MAKILVLYYSMYGHIETLAGAIAEGARKVSGVDVTIKRVPETMPAEAFAKAGGKTNQQAPVATPHELADYDGIIFGTPTRFGNMSGQMRTFLDQTGGLWASGALYGKVASVFASTGTGGGQEHTITSTWTTLAHHGFIIVPIGYGAKELFDVSQTRGGTPYGATTIAGGDGSRQPSAEELAIARFQGEHVAKITAKLKG.

The region spanning 4–190 (ILVLYYSMYG…AIARFQGEHV (187 aa)) is the Flavodoxin-like domain. FMN is bound by residues 10 to 15 (SMYGHI) and 79 to 81 (TRF). Tyrosine 12 contacts NAD(+). Tryptophan 99 serves as a coordination point for substrate. FMN contacts are provided by residues 114 to 119 (STGTGG) and histidine 134.

This sequence belongs to the WrbA family. FMN is required as a cofactor.

The catalysed reaction is a quinone + NADH + H(+) = a quinol + NAD(+). The enzyme catalyses a quinone + NADPH + H(+) = a quinol + NADP(+). The sequence is that of NAD(P)H dehydrogenase (quinone) from Yersinia pseudotuberculosis serotype O:1b (strain IP 31758).